Here is a 484-residue protein sequence, read N- to C-terminus: Sodium/pantothenate symporter (484 aa).

The next 13 helical transmembrane spans lie at 3–23, 45–65, 74–94, 124–144, 162–182, 190–210, 238–258, 273–293, 307–327, 366–386, 397–417, 424–444, and 446–466; these read LGII…AIFA, GFVL…FVGG, LGWV…LGAL, VWLS…VQFI, LLLF…RAVV, TVMI…LGGV, FMAS…HTAV, MLIG…AGAL, VIPT…FLAA, VSYF…FAAL, LFAF…GIYW, GALS…QLGI, and LFNF…FLVG.

Belongs to the sodium:solute symporter (SSF) (TC 2.A.21) family.

It is found in the cell inner membrane. It carries out the reaction (R)-pantothenate(in) + Na(+)(in) = (R)-pantothenate(out) + Na(+)(out). Functionally, catalyzes the sodium-dependent uptake of extracellular pantothenate. The protein is Sodium/pantothenate symporter (panF) of Haemophilus influenzae (strain ATCC 51907 / DSM 11121 / KW20 / Rd).